The following is a 414-amino-acid chain: Cytochrome P450 GfsF (414 aa).

Positions 1-32 (MTDTTLVEAGDPAEDAPEWPMKRDTGCPFDPP) are disordered. Histidine 75, histidine 107, arginine 111, arginine 303, histidine 361, and cysteine 363 together coordinate heme b.

The protein belongs to the cytochrome P450 family. In terms of assembly, monomer. The cofactor is heme b.

It participates in antibiotic biosynthesis. Its function is as follows. Involved in the synthesis of the 16-membered macrolide antibiotics FD-891 and FD-892. Consecutively catalyzes epoxidation of C8-C9 and then hydroxylation at C10 to convert 25-O-methyl-FD-892 to FD-891. Consecutively catalyzes epoxidation of C8-C9 and then hydroxylation at C10 to convert 8,9-epoxy-FD-892 to 25-O-demethyl-FD-891 as well as converting 25-oxo-FD-892 to 8,9-epoxy-25-oxo-FD-892 and 8,9-epoxy-10-hydroxy-25-oxo-FD-892. In vitro is furnished with P.putida putidaredoxin and putidaredoxin reductase to provide the required two-electron reduction. The chain is Cytochrome P450 GfsF from Streptomyces halstedii.